The following is a 338-amino-acid chain: Ornithine carbamoyltransferase (338 aa).

Residues 56 to 59 (STRT), R107, and 134 to 137 (HPTQ) each bind carbamoyl phosphate. Residues N168, D232, and 236–237 (SM) each bind L-ornithine. Residues 274–275 (CL) and R320 contribute to the carbamoyl phosphate site.

Belongs to the aspartate/ornithine carbamoyltransferase superfamily. OTCase family.

The protein localises to the cytoplasm. It carries out the reaction carbamoyl phosphate + L-ornithine = L-citrulline + phosphate + H(+). It participates in amino-acid biosynthesis; L-arginine biosynthesis; L-arginine from L-ornithine and carbamoyl phosphate: step 1/3. Reversibly catalyzes the transfer of the carbamoyl group from carbamoyl phosphate (CP) to the N(epsilon) atom of ornithine (ORN) to produce L-citrulline. The sequence is that of Ornithine carbamoyltransferase (argI) from Buchnera aphidicola subsp. Schizaphis graminum (strain Sg).